The chain runs to 247 residues: ATP synthase subunit a, chloroplastic (247 aa).

The next 5 membrane-spanning stretches (helical) occupy residues 38–58 (QVLI…TIAV), 95–115 (VPFI…GALL), 134–154 (INTT…AGLT), 199–219 (LVVV…VMFL), and 220–240 (GLFT…AYIG).

It belongs to the ATPase A chain family. F-type ATPases have 2 components, CF(1) - the catalytic core - and CF(0) - the membrane proton channel. CF(1) has five subunits: alpha(3), beta(3), gamma(1), delta(1), epsilon(1). CF(0) has four main subunits: a, b, b' and c.

It is found in the plastid. It localises to the chloroplast thylakoid membrane. Key component of the proton channel; it plays a direct role in the translocation of protons across the membrane. The protein is ATP synthase subunit a, chloroplastic of Panax ginseng (Korean ginseng).